Consider the following 74-residue polypeptide: Exodeoxyribonuclease 7 small subunit (74 aa).

The protein belongs to the XseB family. In terms of assembly, heterooligomer composed of large and small subunits.

Its subcellular location is the cytoplasm. It catalyses the reaction Exonucleolytic cleavage in either 5'- to 3'- or 3'- to 5'-direction to yield nucleoside 5'-phosphates.. Functionally, bidirectionally degrades single-stranded DNA into large acid-insoluble oligonucleotides, which are then degraded further into small acid-soluble oligonucleotides. The protein is Exodeoxyribonuclease 7 small subunit of Synechococcus elongatus (strain ATCC 33912 / PCC 7942 / FACHB-805) (Anacystis nidulans R2).